We begin with the raw amino-acid sequence, 382 residues long: Chaperone protein DnaJ (382 aa).

The J domain maps to 4–69 (DYYEVLGVSR…DKRRRYDQFG (66 aa)). Residues 138–219 (GVEKTIKIKK…CYGEGIKQGE (82 aa)) form a CR-type zinc finger. Positions 151, 154, 167, 170, 193, 196, 207, and 210 each coordinate Zn(2+). CXXCXGXG motif repeat units lie at residues 151–158 (CKECNGSG), 167–174 (CPTCHGAG), 193–200 (CPTCGGEG), and 207–214 (CPSCYGEG).

It belongs to the DnaJ family. As to quaternary structure, homodimer. It depends on Zn(2+) as a cofactor.

The protein resides in the cytoplasm. Its function is as follows. Participates actively in the response to hyperosmotic and heat shock by preventing the aggregation of stress-denatured proteins and by disaggregating proteins, also in an autonomous, DnaK-independent fashion. Unfolded proteins bind initially to DnaJ; upon interaction with the DnaJ-bound protein, DnaK hydrolyzes its bound ATP, resulting in the formation of a stable complex. GrpE releases ADP from DnaK; ATP binding to DnaK triggers the release of the substrate protein, thus completing the reaction cycle. Several rounds of ATP-dependent interactions between DnaJ, DnaK and GrpE are required for fully efficient folding. Also involved, together with DnaK and GrpE, in the DNA replication of plasmids through activation of initiation proteins. This chain is Chaperone protein DnaJ, found in Chlorobium luteolum (strain DSM 273 / BCRC 81028 / 2530) (Pelodictyon luteolum).